We begin with the raw amino-acid sequence, 449 residues long: L10-interacting MYB domain-containing protein (449 aa).

A Myb-like domain is found at 162–225 (SNPQTKGYWS…YTRPQLKNHW (64 aa)). The disordered stretch occupies residues 297-324 (TYTPPSRSRKKLLHNRSESPQWRDTTPL). Residues 314-324 (ESPQWRDTTPL) show a composition bias toward polar residues.

Interacts with RPL10A. As to expression, expressed in seedlings, leaves, roots, stems and flowers.

It localises to the nucleus. In terms of biological role, transcriptional repressor that associates with ribosomal protein promoters. The polypeptide is L10-interacting MYB domain-containing protein (Arabidopsis thaliana (Mouse-ear cress)).